The chain runs to 241 residues: Ribosome-recycling factor, mitochondrial (241 aa).

Belongs to the RRF family.

Its subcellular location is the mitochondrion. Functionally, necessary for protein synthesis in mitochondria. Functions as a ribosome recycling factor in mitochondria. The protein is Ribosome-recycling factor, mitochondrial (RRF1) of Kluyveromyces lactis (strain ATCC 8585 / CBS 2359 / DSM 70799 / NBRC 1267 / NRRL Y-1140 / WM37) (Yeast).